The chain runs to 202 residues: Probable GTP-binding protein EngB (202 aa).

Residues 22-197 form the EngB-type G domain; it reads VFPEYAFIGR…LDYIENISKE (176 aa). Residues 30–37, 57–61, 75–78, 142–145, and 173–178 each bind GTP; these read GRSNVGKS, GKTML, DLPG, TKAD, and YFISSS. Residues Ser37 and Thr59 each coordinate Mg(2+).

It belongs to the TRAFAC class TrmE-Era-EngA-EngB-Septin-like GTPase superfamily. EngB GTPase family. The cofactor is Mg(2+).

Functionally, necessary for normal cell division and for the maintenance of normal septation. The sequence is that of Probable GTP-binding protein EngB from Bacteroides thetaiotaomicron (strain ATCC 29148 / DSM 2079 / JCM 5827 / CCUG 10774 / NCTC 10582 / VPI-5482 / E50).